Here is a 109-residue protein sequence, read N- to C-terminus: Cyclic di-AMP receptor A (109 aa).

3',3'-c-di-AMP is bound by residues T21, F25, T28, G35, F36, L37, N41, G47, E92, and G94.

In terms of assembly, homotrimer.

Its subcellular location is the cytoplasm. Its function is as follows. Binds cyclic di-AMP (c-di-AMP) and is probably involved in c-di-AMP-mediated signaling pathways. In vitro, can also bind cyclic GMP-AMP (3'3'-cGAMP), with lower affinity, but not c-di-GMP or 2'3'-cGAMP. The sequence is that of Cyclic di-AMP receptor A from Bacillus subtilis (strain 168).